The primary structure comprises 199 residues: Hematopoietic prostaglandin D synthase (199 aa).

One can recognise a GST N-terminal domain in the interval 2–79; it reads PNYKLTYFNL…YLARESGLAG (78 aa). Residues Tyr8, Arg14, Trp39, 49–51, and 63–64 each bind glutathione; these read GKV and QS. The GST C-terminal domain maps to 81–199; that stretch reads TPVEQALADA…WIQKRPKTAI (119 aa).

This sequence belongs to the GST superfamily. Sigma family. Glutathione serves as cofactor. Highly expressed in liver, kidney, small intestine and colon, moderately in pancreas, bone marrow, lung and ovary, and expressed at low levels in spleen, thymus, heart and brain. Not detected in oviduct or skin (at protein level). Expressed in liver.

The protein localises to the cytoplasm. The enzyme catalyses prostaglandin H2 = prostaglandin D2. It catalyses the reaction RX + glutathione = an S-substituted glutathione + a halide anion + H(+). It carries out the reaction 2-glyceryl-prostaglandin H2 = 2-glyceryl-prostaglandin D2. In terms of biological role, bifunctional enzyme which catalyzes both the conversion of PGH2 to PGD2, a prostaglandin involved in smooth muscle contraction/relaxation and a potent inhibitor of platelet aggregation, and the conjugation of glutathione with a wide range of aryl halides, organic isothiocyanates and alpha,beta-unsaturated carbonyls. Also exhibits low glutathione-peroxidase activity towards cumene hydroperoxide and t-butyl hydroperoxide. The polypeptide is Hematopoietic prostaglandin D synthase (HPGDS) (Gallus gallus (Chicken)).